A 1026-amino-acid chain; its full sequence is Multidrug resistance protein MdtC (1026 aa).

11 helical membrane-spanning segments follow: residues 12–32 (VATT…FSLL), 333–353 (EVEQ…FIFL), 360–380 (LIPA…MYLC), 387–407 (LSLM…IVVL), 431–451 (VGFT…PLLL), 463–483 (FAVT…TLTP), 528–548 (WVLA…VSIP), 853–873 (LLLI…LYES), 897–917 (LFGA…IGIV), 953–973 (PIMM…LTHG), and 984–1004 (ITIV…TPVV).

The protein belongs to the resistance-nodulation-cell division (RND) (TC 2.A.6) family. MdtC subfamily. In terms of assembly, part of a tripartite efflux system composed of MdtA, MdtB and MdtC. MdtC forms a heteromultimer with MdtB.

It is found in the cell inner membrane. This is Multidrug resistance protein MdtC from Serratia proteamaculans (strain 568).